Consider the following 92-residue polypeptide: Small ribosomal subunit protein uS19 (92 aa).

Belongs to the universal ribosomal protein uS19 family.

Protein S19 forms a complex with S13 that binds strongly to the 16S ribosomal RNA. This Acidovorax sp. (strain JS42) protein is Small ribosomal subunit protein uS19.